The primary structure comprises 376 residues: Ribosomal RNA large subunit methyltransferase G (376 aa).

The protein belongs to the methyltransferase superfamily. RlmG family.

It is found in the cytoplasm. It catalyses the reaction guanosine(1835) in 23S rRNA + S-adenosyl-L-methionine = N(2)-methylguanosine(1835) in 23S rRNA + S-adenosyl-L-homocysteine + H(+). Its function is as follows. Specifically methylates the guanine in position 1835 (m2G1835) of 23S rRNA. This Klebsiella pneumoniae (strain 342) protein is Ribosomal RNA large subunit methyltransferase G.